Here is a 474-residue protein sequence, read N- to C-terminus: tRNA-2-methylthio-N(6)-dimethylallyladenosine synthase (474 aa).

The MTTase N-terminal domain occupies 3–120 (KKLHIKTWGC…LPEMINHVQG (118 aa)). 6 residues coordinate [4Fe-4S] cluster: Cys-12, Cys-49, Cys-83, Cys-157, Cys-161, and Cys-164. A Radical SAM core domain is found at 143–375 (RAEGPTAFVS…QQRITQQAME (233 aa)). The TRAM domain maps to 378-441 (REMVGTVQRI…ASSLRGILLR (64 aa)).

Belongs to the methylthiotransferase family. MiaB subfamily. As to quaternary structure, monomer. It depends on [4Fe-4S] cluster as a cofactor.

It is found in the cytoplasm. It catalyses the reaction N(6)-dimethylallyladenosine(37) in tRNA + (sulfur carrier)-SH + AH2 + 2 S-adenosyl-L-methionine = 2-methylsulfanyl-N(6)-dimethylallyladenosine(37) in tRNA + (sulfur carrier)-H + 5'-deoxyadenosine + L-methionine + A + S-adenosyl-L-homocysteine + 2 H(+). Its function is as follows. Catalyzes the methylthiolation of N6-(dimethylallyl)adenosine (i(6)A), leading to the formation of 2-methylthio-N6-(dimethylallyl)adenosine (ms(2)i(6)A) at position 37 in tRNAs that read codons beginning with uridine. The protein is tRNA-2-methylthio-N(6)-dimethylallyladenosine synthase of Yersinia enterocolitica serotype O:8 / biotype 1B (strain NCTC 13174 / 8081).